Here is an 854-residue protein sequence, read N- to C-terminus: Probable inactive serine/threonine-protein kinase DDB_G0274821 (854 aa).

Residues 1–266 (MPIKESFKRI…WPKLFIHPFF (266 aa)) enclose the Protein kinase domain. 2 N-linked (GlcNAc...) asparagine glycosylation sites follow: asparagine 32 and asparagine 106. The interval 116-135 (NNNNNNNNNNNNNNNNNNNN) is disordered. N-linked (GlcNAc...) asparagine glycosylation is found at asparagine 163, asparagine 279, asparagine 283, and asparagine 290. Residues 289–331 (LNKSSSSSSSSSSSSSSSSSSSSSSSLSFQQQQQPNNISSPNL) are disordered. Over residues 292–322 (SSSSSSSSSSSSSSSSSSSSSSSLSFQQQQQ) the composition is skewed to low complexity. N-linked (GlcNAc...) asparagine glycans are attached at residues asparagine 325, asparagine 347, and asparagine 365. The disordered stretch occupies residues 384–408 (IISPNRPSSPPLSSLSSCSSSSSSS). Residue asparagine 414 is glycosylated (N-linked (GlcNAc...) asparagine). Residues 425-446 (NNNNNNNNNNNNNNNNNNNNNN) form a disordered region. Asparagine 520, asparagine 541, and asparagine 620 each carry an N-linked (GlcNAc...) asparagine glycan. Positions 627–650 (SSPPPSSSSSSSSPSSPSSTSPSL) are disordered. Low complexity predominate over residues 633–650 (SSSSSSSPSSPSSTSPSL). Asparagine 757 carries N-linked (GlcNAc...) asparagine glycosylation. Residues 770–792 (HWRVQISFLNILFILITINNNFI) form a helical membrane-spanning segment.

This sequence belongs to the protein kinase superfamily. Ser/Thr protein kinase family.

It localises to the membrane. This Dictyostelium discoideum (Social amoeba) protein is Probable inactive serine/threonine-protein kinase DDB_G0274821.